The chain runs to 481 residues: UDP-N-acetylmuramoyl-L-alanyl-D-glutamate--L-lysine ligase (481 aa).

Serine 42 contributes to the UDP-N-acetyl-alpha-D-muramoyl-L-alanyl-D-glutamate binding site. Position 118–124 (118–124 (GTKGKTT)) interacts with ATP. UDP-N-acetyl-alpha-D-muramoyl-L-alanyl-D-glutamate-binding positions include 160–161 (TT), serine 187, and arginine 195. Lysine 229 carries the N6-carboxylysine modification. The L-lysine recognition motif signature appears at 404 to 407 (DDPN).

Belongs to the MurCDEF family. MurE subfamily. Carboxylation is probably crucial for Mg(2+) binding and, consequently, for the gamma-phosphate positioning of ATP.

Its subcellular location is the cytoplasm. The enzyme catalyses UDP-N-acetyl-alpha-D-muramoyl-L-alanyl-D-glutamate + L-lysine + ATP = UDP-N-acetyl-alpha-D-muramoyl-L-alanyl-gamma-D-glutamyl-L-lysine + ADP + phosphate + H(+). It functions in the pathway cell wall biogenesis; peptidoglycan biosynthesis. Functionally, catalyzes the addition of L-lysine to the nucleotide precursor UDP-N-acetylmuramoyl-L-alanyl-D-glutamate (UMAG) in the biosynthesis of bacterial cell-wall peptidoglycan. The chain is UDP-N-acetylmuramoyl-L-alanyl-D-glutamate--L-lysine ligase from Streptococcus pneumoniae (strain ATCC BAA-255 / R6).